The following is a 958-amino-acid chain: Nuclear factor NF-kappa-B p100 subunit (958 aa).

One can recognise an RHD domain in the interval 40–230; that stretch reads LLMSYLSIIE…DPIHDSKSPG (191 aa). The Nuclear localization signal signature appears at 343–347; it reads RKRRK. 2 disordered regions span residues 350 to 374 and 411 to 442; these read PTFN…SFGQ and CSAT…QTDS. The interval 352-390 is GRR; it reads FNNHFYGGGSPMGGAPPGSSFGQGGGSNINYQYTGMNSA. A compositionally biased stretch (gly residues) spans 357–374; sequence YGGGSPMGGAPPGSSFGQ. Residues 412–425 are compositionally biased toward polar residues; sequence SATNSSEKNQQPSI. ANK repeat units lie at residues 500–529, 539–568, 572–603, 610–639, 644–674, and 678–707; these read NGDT…SIPN, LQQT…DPTI, YGNS…QKNL, HGLS…NVNS, SGKS…DINA, and GGNT…NVLS. The interval 705–766 is disordered; it reads VLSENDEPVN…SAEEMHRREQ (62 aa). Positions 724 to 734 are enriched in acidic residues; that stretch reads SESDSDVQMDT. Positions 753–766 are enriched in basic and acidic residues; that stretch reads ECEHSAEEMHRREQ. A Death domain is found at 815–901; the sequence is VNVLALETNT…EGVELLCKSE (87 aa). Basic and acidic residues predominate over residues 904–916; that stretch reads AKHHSPAESKNDS. Positions 904-958 are disordered; sequence AKHHSPAESKNDSAYESQSMEVDQSSGNLMDDSQKQTIPVSAAELCPTTEPTIGQ. Residues 917–931 are compositionally biased toward polar residues; that stretch reads AYESQSMEVDQSSGN.

Active NF-kappa-B is a heterodimer of an about 52 kDa DNA-binding subunit and the weak DNA-binding subunit p65. Two heterodimers might form a labile tetramer. In terms of processing, while translation occurs, the particular unfolded structure after the GRR repeat promotes the generation of p52 making it an acceptable substrate for the proteasome. This process is known as cotranslational processing. The processed form is active and the unprocessed form acts as an inhibitor (I kappa B-like), being able to form cytosolic complexes with NF-kappa B, trapping it in the cytoplasm. Complete folding of the region downstream of the GRR repeat precludes processing. Post-translationally, constitutive processing is tightly suppressed by its C-terminal processing inhibitory domain, named PID, which contains the death domain. Expressed in spleen.

The protein localises to the nucleus. It is found in the cytoplasm. Appears to have dual functions such as cytoplasmic retention of attached NF-kappa-B proteins and generation of p52 by a cotranslational processing. The proteasome-mediated process ensures the production of both p52 and p100 and preserves their independent function. p52 binds to the kappa-B consensus sequence 5'-GGRNNYYCC-3', located in the enhancer region of genes involved in immune response and acute phase reactions. In concert with RELB, may play a role in the regulation of the circadian clock. This Xenopus laevis (African clawed frog) protein is Nuclear factor NF-kappa-B p100 subunit (nfkb2).